Consider the following 102-residue polypeptide: PqqA binding protein (102 aa).

It belongs to the PqqD family. As to quaternary structure, monomer. Interacts with PqqE.

Its pathway is cofactor biosynthesis; pyrroloquinoline quinone biosynthesis. Its function is as follows. Functions as a PqqA binding protein and presents PqqA to PqqE, in the pyrroloquinoline quinone (PQQ) biosynthetic pathway. The protein is PqqA binding protein of Rhodopseudomonas palustris (strain ATCC BAA-98 / CGA009).